The following is an 840-amino-acid chain: Protein translocase subunit SecA (840 aa).

Residues Q87, 105-109, and D494 each bind ATP; that span reads GEGKT. The disordered stretch occupies residues 791-840; sequence LRKEQEDQPMFFGPAEGAGQKPQTRKDRKVGRNDPCPCGSGKKYKKCCGK. Positions 826, 828, 837, and 838 each coordinate Zn(2+).

It belongs to the SecA family. As to quaternary structure, monomer and homodimer. Part of the essential Sec protein translocation apparatus which comprises SecA, SecYEG and auxiliary proteins SecDF-YajC and YidC. Zn(2+) serves as cofactor.

The protein localises to the cell inner membrane. It localises to the cytoplasm. It catalyses the reaction ATP + H2O + cellular proteinSide 1 = ADP + phosphate + cellular proteinSide 2.. Its function is as follows. Part of the Sec protein translocase complex. Interacts with the SecYEG preprotein conducting channel. Has a central role in coupling the hydrolysis of ATP to the transfer of proteins into and across the cell membrane, serving as an ATP-driven molecular motor driving the stepwise translocation of polypeptide chains across the membrane. This is Protein translocase subunit SecA from Syntrophobacter fumaroxidans (strain DSM 10017 / MPOB).